The following is a 405-amino-acid chain: Cellobiose 2-epimerase (405 aa).

Belongs to the cellobiose 2-epimerase family.

It catalyses the reaction D-cellobiose = beta-D-glucosyl-(1-&gt;4)-D-mannopyranose. Catalyzes the reversible epimerization of cellobiose to 4-O-beta-D-glucopyranosyl-D-mannose (Glc-Man). Can also epimerize lactose to epilactose. The chain is Cellobiose 2-epimerase (ce13) from Eubacterium cellulosolvens.